We begin with the raw amino-acid sequence, 98 residues long: Lipolysis-activating peptide 1-beta chain (98 aa).

The first 22 residues, M1–G22, serve as a signal peptide directing secretion. Residues D23–P91 enclose the LCN-type CS-alpha/beta domain. 3 disulfides stabilise this stretch: C37–C60, C45–C70, and C49–C72.

Belongs to the long (3 C-C) scorpion toxin superfamily. In terms of assembly, homodimer; disulfide-linked or monomer (edited version) or heterodimer of an alpha chain (AC B8XH01) and this beta chain (non-edited version). Expressed by the venom gland.

It localises to the secreted. In terms of biological role, the homodimer inhibits HMG-CoA reductase (HMGCR) (32% of inhibition produced by 0.6 uM), a glycoprotein involved in the control of cholesterol biosynthesis. The inhibitory effects of bumarsin are seen at much lower concentrations (0.6 uM) than that for statins such as atorvastatin (5 mM) and simvastatin (10 uM). In addition to inhibition of HMG-CoA reductase, this protein lowers cholesterol levels by inducing steroid hormone synthesis via StAR, and by increasing reverse cholesterol transport mediated by the induction of ABCA1 and APOA1. Functionally, the heterodimer non-edited LVP1 induces lipolysis in rat adipocytes. Induction of lipolysis by LVP1 appears to be mediated through the beta-2 adrenergic receptor pathway (ADRB2). The monomer edited version, similar to alpha-toxins, may modulate voltage-gated sodium channels (Nav) and may block voltage-gated potassium channels (Kv). This is Lipolysis-activating peptide 1-beta chain from Buthus israelis (Israeli scorpion).